The following is a 445-amino-acid chain: CBL-interacting serine/threonine-protein kinase 8 (445 aa).

The Protein kinase domain occupies 9 to 262 (YELGRTIGEG…IAEIRKDEWF (254 aa)). ATP contacts are provided by residues 15–23 (IGEGTFAKV) and Lys-38. Asp-132 functions as the Proton acceptor in the catalytic mechanism. Residues 150–177 (DFGLSALPEQGVTILKTTCGTPNYVAPE) form an activation loop region. A Phosphoserine modification is found at Ser-154. A Phosphothreonine modification is found at Thr-166. In terms of domain architecture, NAF spans 302–326 (TGPLTLNAFDLIILSQGLNLATLFD). The interval 333-362 (KHQTRFISHKPANVVLSSMEVVSQSMGFKT) is PPI.

It belongs to the protein kinase superfamily. CAMK Ser/Thr protein kinase family. SNF1 subfamily. In terms of assembly, interacts with CBL1 and CBL9. It depends on Mn(2+) as a cofactor. In terms of tissue distribution, mostly expressed in roots, and, to a lower extent, in leaves, stems, flowers, and siliques.

The enzyme catalyses L-seryl-[protein] + ATP = O-phospho-L-seryl-[protein] + ADP + H(+). It carries out the reaction L-threonyl-[protein] + ATP = O-phospho-L-threonyl-[protein] + ADP + H(+). Its function is as follows. CIPK serine-threonine protein kinases interact with CBL proteins. Binding of a CBL protein to the regulatory NAF domain of CIPK protein lead to the activation of the kinase in a calcium-dependent manner. The polypeptide is CBL-interacting serine/threonine-protein kinase 8 (CIPK8) (Arabidopsis thaliana (Mouse-ear cress)).